The following is a 1121-amino-acid chain: Ataxin-2 homolog (1121 aa).

A compositionally biased stretch (basic residues) spans Met1–Arg10. The tract at residues Met1 to Gly53 is disordered. Over residues Ser12 to Gly22 the composition is skewed to gly residues. Residues Tyr27–Pro36 show a composition bias toward polar residues. Low complexity predominate over residues Ala37–Ser47. Residues Phe71–Asp146 form the Sm domain. Residues Ser219 and Ser232 each carry the phosphoserine modification. Disordered stretches follow at residues Phe270–Gly376, Gly422–Gln458, Met476–Thr935, and Gln1039–Thr1076. Basic and acidic residues predominate over residues Glu274–Asn310. The segment covering Glu323 to Ser347 has biased composition (polar residues). 2 stretches are compositionally biased toward gly residues: residues Ile367 to Gly376 and Ser434 to Asn448. Composition is skewed to polar residues over residues Met476–His487 and Ala499–Asn524. Low complexity-rich tracts occupy residues Pro552–Gln596, Pro623–Gln684, Gln697–Pro711, and Gln720–Pro773. Positions Ser774–Thr789 are enriched in pro residues. Composition is skewed to low complexity over residues Ile807–Pro825 and Thr835–Val890. Composition is skewed to pro residues over residues Pro914 to Met926 and Pro1048 to Ser1062.

This sequence belongs to the ataxin-2 family.

The protein resides in the cytoplasm. Its function is as follows. Regulator of actin filament formation, though it does not directly assemble with actin filaments. Required for oocyte specification and oocyte positioning in the female germline. Also required for normal eye development and bristle morphology. The sequence is that of Ataxin-2 homolog from Drosophila pseudoobscura pseudoobscura (Fruit fly).